The chain runs to 565 residues: Frizzled-2 (565 aa).

An N-terminal signal peptide occupies residues 1–23 (MRPRSALPRLLLPLLLLPAAGPA). The Extracellular portion of the chain corresponds to 24–247 (QFHGEKGISI…QEETRFARLW (224 aa)). The 120-residue stretch at 34–153 (PDHGFCQPIS…HGAEQICVGQ (120 aa)) folds into the FZ domain. Disulfide bonds link Cys-39/Cys-100, Cys-47/Cys-93, Cys-84/Cys-121, Cys-110/Cys-150, and Cys-114/Cys-138. Asn-53 is a glycosylation site (N-linked (GlcNAc...) asparagine). Residue Asn-154 is glycosylated (N-linked (GlcNAc...) asparagine). Residues 160 to 189 (APALLTTAPPPGLQPGAGGTPGGPGGGGAP) form a disordered region. Over residues 174–188 (PGAGGTPGGPGGGGA) the composition is skewed to gly residues. The helical transmembrane segment at 248–268 (ILTWSVLCCASTFFTVTTYLV) threads the bilayer. Residues 269 to 279 (DMQRFRYPERP) are Cytoplasmic-facing. A helical membrane pass occupies residues 280–300 (IIFLSGCYTMVSVAYIAGFVL). Over 301-327 (QERVVCNERFSEDGYRTVVQGTKKEGC) the chain is Extracellular. A helical membrane pass occupies residues 328–348 (TILFMMLYFFSMASSIWWVIL). Over 349-370 (SLTWFLAAGMKWGHEAIEANSQ) the chain is Cytoplasmic. Residues 371–391 (YFHLAAWAVPAVKTITILAMG) traverse the membrane as a helical segment. Residues 392–414 (QIDGDLLSGVCFVGLNSLDPLRG) lie on the Extracellular side of the membrane. The chain crosses the membrane as a helical span at residues 415 to 435 (FVLAPLFVYLFIGTSFLLAGF). Over 436-461 (VSLFRIRTIMKHDGTKTEKLERLMVR) the chain is Cytoplasmic. A helical transmembrane segment spans residues 462–482 (IGVFSVLYTVPATIVIACYFY). Residues 483–519 (EQAFREHWERSWVSQHCKSLAIPCPAHYTPRMSPDFT) lie on the Extracellular side of the membrane. The chain crosses the membrane as a helical span at residues 520–540 (VYMIKYLMTLIVGITSGFWIW). Residues 541–565 (SGKTLHSWRKFYTRLTNSRHGETTV) are Cytoplasmic-facing. Residues 543–548 (KTLHSW) carry the Lys-Thr-X-X-X-Trp motif, mediates interaction with the PDZ domain of Dvl family members motif. The short motif at 563–565 (TTV) is the PDZ-binding element.

This sequence belongs to the G-protein coupled receptor Fz/Smo family. In terms of assembly, (Microbial infection) Interacts with C.difficile toxin TcdB; frizzled receptors constitute the major host receptors for TcdB in the colonic epithelium. Ubiquitinated by ZNRF3, leading to its degradation by the proteasome. In terms of tissue distribution, widely expressed. In the adult, mainly found in heart, placenta, skeletal muscle, lung, kidney, pancreas, prostate, testis, ovary and colon. In the fetus, expressed in brain, lung and kidney. Low levels in fetal liver.

Its subcellular location is the membrane. The protein localises to the cell membrane. Its function is as follows. Receptor for Wnt proteins. Most of frizzled receptors are coupled to the beta-catenin canonical signaling pathway, which leads to the activation of disheveled proteins, inhibition of GSK-3 kinase, nuclear accumulation of beta-catenin and activation of Wnt target genes. A second signaling pathway involving PKC and calcium fluxes has been seen for some family members, but it is not yet clear if it represents a distinct pathway or if it can be integrated in the canonical pathway, as PKC seems to be required for Wnt-mediated inactivation of GSK-3 kinase. Both pathways seem to involve interactions with G-proteins. May be involved in transduction and intercellular transmission of polarity information during tissue morphogenesis and/or in differentiated tissues. Functionally, (Microbial infection) Acts as a receptor for C.difficile toxin TcdB in the colonic epithelium. TcdB occupies the binding site for Wnt-adducted palmitoleate in frizzled receptors and TcdB-binding prevents Wnt-binding and downstream Wnt signaling. The chain is Frizzled-2 (FZD2) from Homo sapiens (Human).